A 301-amino-acid polypeptide reads, in one-letter code: Ubiquitin thioesterase OTU1 (301 aa).

The tract at residues 5 to 83 is UBX-like; that stretch reads RCKAKNGTHL…IVEEEKNKPK (79 aa). An OTU domain is found at 102-227; that stretch reads VERRVVPADN…GIHYDPLQKV (126 aa). A cys-loop region spans residues 107–113; that stretch reads VPADNSC. The active site involves Asp110. Cys113 (nucleophile) is an active-site residue. The variable-loop stretch occupies residues 166 to 176; that stretch reads IRRDDTWGGAI. The interval 216–220 is his-loop; that stretch reads YDGIH. Position 219 (Ile219) interacts with substrate. His220 is a catalytic residue. An S2 site region spans residues 244-249; the sequence is DVILAQ. Residues 271 to 295 form a C2H2-type zinc finger; sequence LRCMVCQTGLVGQKEAREHAKETGH. Residue His295 is part of the active site.

The protein resides in the cytoplasm. The catalysed reaction is Thiol-dependent hydrolysis of ester, thioester, amide, peptide and isopeptide bonds formed by the C-terminal Gly of ubiquitin (a 76-residue protein attached to proteins as an intracellular targeting signal).. Its function is as follows. Hydrolase that can remove conjugated ubiquitin from proteins and participates in endoplasmic reticulum-associated degradation (ERAD) for misfolded lumenal proteins. May act by triming the ubiquitin chain on the associated substrate to facilitate their threading through the VCP/p97 pore. Ubiquitin moieties on substrates may present a steric impediment to the threading process when the substrate is transferred to the VCP pore and threaded through VCP's axial channel. Mediates deubiquitination of 'Lys-27'-, 'Lys-29'- and 'Lys-33'-linked polyubiquitin chains. Also able to hydrolyze 'Lys-11'-linked ubiquitin chains. Cleaves both polyubiquitin and di-ubiquitin. The protein is Ubiquitin thioesterase OTU1 (yod1) of Danio rerio (Zebrafish).